Consider the following 312-residue polypeptide: Flavonol 3-sulfotransferase (312 aa).

Position 59 to 64 (59 to 64) interacts with 3'-phosphoadenylyl sulfate; it reads KSGTTW. His-119 functions as the Proton acceptor in the catalytic mechanism. 3'-phosphoadenylyl sulfate is bound by residues Arg-141, Ser-149, Tyr-207, and 277–279; that span reads RKG.

Belongs to the sulfotransferase 1 family. As to expression, highest in shoot tips and lowest in mature leaves and roots.

The protein localises to the cytoplasm. Sulfotransferase that utilizes 3'-phospho-5'-adenylyl sulfate (PAPS) as sulfonate donor to catalyze the sulfate conjugation of quercetin, rhamnetin and isorhamnetin but not kaempferol. O-sulfation of position 3 of flavonol. May play a role in auxin transport. The protein is Flavonol 3-sulfotransferase of Flaveria bidentis (Coastal plain yellowtops).